The primary structure comprises 153 residues: Transcriptional repressor NrdR (153 aa).

The disordered stretch occupies residues 1–22; it reads MRCPACHHNGTRVLDSRPAHEG. Residues 3 to 34 fold into a zinc finger; the sequence is CPACHHNGTRVLDSRPAHEGRSIRRRRECESC. The 91-residue stretch at 49–139 folds into the ATP-cone domain; it reads LIVVKKDGTR…VYRQFKDINV (91 aa).

The protein belongs to the NrdR family. Zn(2+) serves as cofactor.

Negatively regulates transcription of bacterial ribonucleotide reductase nrd genes and operons by binding to NrdR-boxes. The protein is Transcriptional repressor NrdR of Halalkalibacterium halodurans (strain ATCC BAA-125 / DSM 18197 / FERM 7344 / JCM 9153 / C-125) (Bacillus halodurans).